Consider the following 266-residue polypeptide: Ribosomal RNA small subunit methyltransferase A (266 aa).

S-adenosyl-L-methionine-binding residues include Asn-11, Leu-13, Gly-37, Glu-57, Asp-85, and Asn-104.

The protein belongs to the class I-like SAM-binding methyltransferase superfamily. rRNA adenine N(6)-methyltransferase family. RsmA subfamily.

Its subcellular location is the cytoplasm. It catalyses the reaction adenosine(1518)/adenosine(1519) in 16S rRNA + 4 S-adenosyl-L-methionine = N(6)-dimethyladenosine(1518)/N(6)-dimethyladenosine(1519) in 16S rRNA + 4 S-adenosyl-L-homocysteine + 4 H(+). In terms of biological role, specifically dimethylates two adjacent adenosines (A1518 and A1519) in the loop of a conserved hairpin near the 3'-end of 16S rRNA in the 30S particle. May play a critical role in biogenesis of 30S subunits. This is Ribosomal RNA small subunit methyltransferase A from Campylobacter jejuni (strain RM1221).